Consider the following 51-residue polypeptide: Ovomucoid (51 aa).

The 49-residue stretch at 3 to 51 (IDCSGYPKPACTLEFFPLCGSDNQTYSNKCAFCNAAVEKNVTLNHIGEC) folds into the Kazal-like domain. 3 cysteine pairs are disulfide-bonded: cysteine 5/cysteine 35, cysteine 13/cysteine 32, and cysteine 21/cysteine 51. Asparagine 42 carries N-linked (GlcNAc...) asparagine glycosylation.

Its subcellular location is the secreted. In Eudromia elegans (Elegant crested-tinamou), this protein is Ovomucoid.